Here is a 269-residue protein sequence, read N- to C-terminus: Large ribosomal subunit protein uL3m (269 aa).

The transit peptide at 1 to 19 (MSKFLQGSIFSISKLHVRY) directs the protein to the mitochondrion.

The protein belongs to the universal ribosomal protein uL3 family. In terms of assembly, component of the mitochondrial large ribosomal subunit (mt-LSU). Mature yeast 74S mitochondrial ribosomes consist of a small (37S) and a large (54S) subunit. The 37S small subunit contains a 15S ribosomal RNA (15S mt-rRNA) and 34 different proteins. The 54S large subunit contains a 21S rRNA (21S mt-rRNA) and 46 different proteins.

Its subcellular location is the mitochondrion. In terms of biological role, component of the mitochondrial ribosome (mitoribosome), a dedicated translation machinery responsible for the synthesis of mitochondrial genome-encoded proteins, including at least some of the essential transmembrane subunits of the mitochondrial respiratory chain. The mitoribosomes are attached to the mitochondrial inner membrane and translation products are cotranslationally integrated into the membrane. The sequence is that of Large ribosomal subunit protein uL3m (MRPL9) from Saccharomyces cerevisiae (strain ATCC 204508 / S288c) (Baker's yeast).